Consider the following 132-residue polypeptide: Vesicle transport protein GOT1A (132 aa).

Residues 1–9 (MISITEWQK) are Cytoplasmic-facing. A helical transmembrane segment spans residues 10–30 (IGVGITGFGIFFILFGTLLYF). Position 31 (Asp-31) is a topological domain, lumenal. The helical transmembrane segment at 32–52 (SVLLAFGNLLFLTGLSLIIGL) threads the bilayer. Over 53–68 (RKTFWFFFQRHKLKGT) the chain is Cytoplasmic. The helical transmembrane segment at 69-89 (SFLLGGVVIVLLRWPLLGMFL) threads the bilayer. Residues 90–100 (ETYGFFSLFKG) are Lumenal-facing. Residues 101-121 (FFPVAFGFLGNVCNIPFLGAL) form a helical membrane-spanning segment. At 122–132 (FRRLQGTSSMV) the chain is on the cytoplasmic side.

This sequence belongs to the GOT1 family.

The protein localises to the golgi apparatus membrane. In terms of biological role, may be involved in fusion of ER-derived transport vesicles with the Golgi complex. The sequence is that of Vesicle transport protein GOT1A from Homo sapiens (Human).